The chain runs to 223 residues: uncharacterized protein (223 aa).

This is an uncharacterized protein from Dryophytes versicolor (chameleon treefrog).